The sequence spans 303 residues: Protease HtpX (303 aa).

The next 2 helical transmembrane spans lie at 4–24 and 42–62; these read IGLF…VFGI and IASL…ISLF. Zn(2+) is bound at residue histidine 149. Residue glutamate 150 is part of the active site. Zn(2+) is bound at residue histidine 153. The next 2 membrane-spanning stretches (helical) occupy residues 157-177 and 200-220; these read GDMV…MFFA and FVTS…IVMW. Residue glutamate 226 participates in Zn(2+) binding.

It belongs to the peptidase M48B family. It depends on Zn(2+) as a cofactor.

It localises to the cell inner membrane. The protein is Protease HtpX of Psychrobacter sp. (strain PRwf-1).